Here is a 491-residue protein sequence, read N- to C-terminus: MDLEKKPQDKVETAEIDVKEDPFLVTWQSPTDPKNPKNWIYARKWTQLILVSAFALLGPMASSMVAPCLDQIADRFHIQNSTEKALILSIYLLVFAISPMISAPLSEVFGRRMLLQVGNVIFIVFNMACGLARTKAQMYIFRFLAGFGSATPMGLGSGTISDLFTPDERGKAVAVMSLAPLLGPTIGPVVSGFIAEYTTYKWIFWSTTIFSGFIFALSLPLLAETYPKTLLGEKARKLNKSEKTNKYHTEWNLEHIPRLKLVTPALMRPIRMLFTQPIVILCSTYMAIQYGILYLVLTTYPTLWTEEYHERPSIAGLNYIASGIGLIFGSQASGIFIDKTFRYLKRRNNGKMAPEFRVPVILLGTFFFPAGLFIYGWTAQYHTHWIGPDIGAAMFNIGLMLGWRGIQTYLIDSFMIYAASSTAVACCVRSIAAFAFPLFGQDMYDTLGYGWGNSLLAFIVLGSSIITCSLLWFGGKRLRALSSMVIFKDDV.

Helical transmembrane passes span 48-68 (LILVSAFALLGPMASSMVAPC), 85-105 (ALILSIYLLVFAISPMISAPL), 112-132 (RMLLQVGNVIFIVFNMACGLA), 140-160 (IFRFLAGFGSATPMGLGSGTI), 174-194 (AVMSLAPLLGPTIGPVVSGFI), 202-222 (WIFWSTTIFSGFIFALSLPLL), 277-297 (PIVILCSTYMAIQYGILYLVL), 317-337 (LNYIASGIGLIFGSQASGIFI), 358-378 (VPVILLGTFFFPAGLFIYGWT), 383-403 (THWIGPDIGAAMFNIGLMLGW), 408-428 (TYLIDSFMIYAASSTAVACCV), and 455-475 (LLAFIVLGSSIITCSLLWFGG).

It belongs to the major facilitator superfamily.

It is found in the membrane. This is an uncharacterized protein from Schizosaccharomyces pombe (strain 972 / ATCC 24843) (Fission yeast).